Consider the following 152-residue polypeptide: Large ribosomal subunit protein bL9 (152 aa).

This sequence belongs to the bacterial ribosomal protein bL9 family.

In terms of biological role, binds to the 23S rRNA. This is Large ribosomal subunit protein bL9 from Synechocystis sp. (strain ATCC 27184 / PCC 6803 / Kazusa).